We begin with the raw amino-acid sequence, 182 residues long: MDSSRILRYEGRLDFGSLRARRIRAESEIPAVVYGKESDVLHIKIKSSEFNNKFAKFTDNTVLILSDGKIEKCVFIKDVSENLTKRLIYHVDFYEVDKTKDIERDIAIKFVGASVGVKEGGTLSVLRTKIKVKSLPLNLPEFVEVDLTPVKKGDQVTFKDIVLPDNVKLSEENENSVVLLVK.

This sequence belongs to the bacterial ribosomal protein bL25 family. CTC subfamily. In terms of assembly, part of the 50S ribosomal subunit; part of the 5S rRNA/L5/L18/L25 subcomplex. Contacts the 5S rRNA. Binds to the 5S rRNA independently of L5 and L18.

Its function is as follows. This is one of the proteins that binds to the 5S RNA in the ribosome where it forms part of the central protuberance. The protein is Large ribosomal subunit protein bL25 of Borrelia hermsii (strain HS1 / DAH).